A 53-amino-acid polypeptide reads, in one-letter code: Large ribosomal subunit protein eL24 (53 aa).

Zn(2+)-binding residues include cysteine 4, cysteine 7, cysteine 30, and cysteine 34. Residues 4–34 (CSFCHEEIEPGTGKMYVKRDGTIYFFCSSKC) form a C4-type zinc finger.

Belongs to the eukaryotic ribosomal protein eL24 family. In terms of assembly, part of the 50S ribosomal subunit. Forms a cluster with proteins L3 and L14. The cofactor is Zn(2+).

Functionally, binds to the 23S rRNA. This Methanothermobacter thermautotrophicus (strain ATCC 29096 / DSM 1053 / JCM 10044 / NBRC 100330 / Delta H) (Methanobacterium thermoautotrophicum) protein is Large ribosomal subunit protein eL24.